Consider the following 327-residue polypeptide: MTMDSGADNQQSGDAAVTEAESQQMTVQAQPQIATLAQVSMPAAHATSSAPTVTLVQLPNGQTVQVHGVIQAAQPSVIQSPQVQTVQISTIAESEDSQESVDSVTDSQKRREILSRRPSYRKILNDLSSDAPGVPRIEEEKSEEETSAPAITTVTVPTPIYQTSSGQYIAITQGGAIQLANNGTDGVQGLQTLTMTNAAATQPGTTILQYAQTTDGQQILVPSNQVVVQAASGDVQTYQIRTAPTSTIAPGVVMASSPALPTQPAEEAARKREVRLMKNREAARECRRKKKEYVKCLENRVAVLENQNKTLIEELKALKDLYCHKSD.

2 disordered regions span residues 1 to 29 (MTMD…TVQA) and 94 to 113 (SEDS…RREI). The KID domain occupies 8-146 (DNQQSGDAAV…IEEEKSEEET (139 aa)). Over residues 20-29 (AESQQMTVQA) the composition is skewed to polar residues. Ser-119 is modified (phosphoserine; by CaMK1, CaMK2, CaMK4, PKB/AKT1 or PKB/AKT2, RPS6KA3, RPS6KA4, RPS6KA5 and SGK1). A Glycyl lysine isopeptide (Lys-Gly) (interchain with G-Cter in SUMO2) cross-link involves residue Lys-122. The tract at residues 126–149 (DLSSDAPGVPRIEEEKSEEETSAP) is disordered. Ser-128 carries the phosphoserine; by CaMK2 modification. The residue at position 257 (Ser-257) is a Phosphoserine; by HIPK2. The bZIP domain occupies 269 to 327 (ARKREVRLMKNREAARECRRKKKEYVKCLENRVAVLENQNKTLIEELKALKDLYCHKSD). The interval 270 to 295 (RKREVRLMKNREAARECRRKKKEYVK) is basic motif. Glycyl lysine isopeptide (Lys-Gly) (interchain with G-Cter in SUMO1) cross-links involve residues Lys-271 and Lys-290. Residues 297–318 (LENRVAVLENQNKTLIEELKAL) form a leucine-zipper region.

Belongs to the bZIP family. In terms of assembly, interacts with PPRC1. Binds DNA as a dimer. This dimer is stabilized by magnesium ions. Interacts, through the bZIP domain, with the coactivators CRTC1/TORC1, CRTC2/TORC2 and CRTC3/TORC3. When phosphorylated on Ser-119, binds CREBBP. Interacts with CREBL2; regulates CREB1 phosphorylation, stability and transcriptional activity. Interacts (phosphorylated form) with TOX3. Interacts with ARRB1. Binds to HIPK2. Interacts with SGK1. Interacts with TSSK4; this interaction facilitates phosphorylation on Ser-119. Forms a complex with KMT2A and CREBBP. Interacts with TOX4; CREB1 is required for full induction of TOX4-dependent activity and the interaction is increased by cAMP and inhibited by insulin. Phosphorylation of Ser-119 allows CREBBP binding. Stimulated by phosphorylation. Phosphorylation of both Ser-128 and Ser-119 in the SCN regulates the activity of CREB and participate in circadian rhythm generation. Phosphorylated upon calcium influx by CaMK4 and CaMK2 on Ser-119. CaMK4 is much more potent than CaMK2 in activating CREB. Phosphorylated by CaMK2 on Ser-128. Phosphorylation of Ser-128 blocks CREB-mediated transcription even when Ser-119 is phosphorylated. Phosphorylated by CaMK1. Phosphorylation of Ser-257 by HIPK2 in response to genotoxic stress promotes CREB1 activity, facilitating the recruitment of the coactivator CBP. Phosphorylated at Ser-119 by RPS6KA3, RPS6KA4 and RPS6KA5 in response to mitogenic or stress stimuli. CREBL2 positively regulates phosphorylation at Ser-119 thereby stimulating CREB1 transcriptional activity. In liver, phosphorylation is induced by fasting or glucagon in a circadian fashion. Phosphorylated by TSSK4 on Ser-119. In terms of processing, sumoylated with SUMO1. Sumoylation on Lys-290, but not on Lys-271, is required for nuclear localization of this protein. Sumoylation is enhanced under hypoxia, promoting nuclear localization and stabilization.

Its subcellular location is the nucleus. Its function is as follows. Phosphorylation-dependent transcription factor that stimulates transcription upon binding to the DNA cAMP response element (CRE), a sequence present in many viral and cellular promoters. Transcription activation is enhanced by the TORC coactivators which act independently of Ser-119 phosphorylation. Involved in different cellular processes including the synchronization of circadian rhythmicity and the differentiation of adipose cells. Regulates the expression of apoptotic and inflammatory response factors in cardiomyocytes in response to ERFE-mediated activation of AKT signaling. This Rattus norvegicus (Rat) protein is Cyclic AMP-responsive element-binding protein 1 (Creb1).